The chain runs to 548 residues: NAD(P)H-quinone oxidoreductase chain 4 (548 aa).

The next 14 membrane-spanning stretches (helical) occupy residues 17-37, 48-68, 103-123, 127-147, 149-169, 181-201, 222-242, 256-276, 290-310, 327-347, 348-368, 389-409, 430-450, and 477-497; these read VPWL…IPFI, WYAL…YLTG, LILL…PVTF, LFFF…AVQD, LLFF…LAIW, FILY…AMGF, GFQL…LPIV, TAPV…YALL, FAPL…LTSF, MGFV…GAML, QMIS…ATYD, FALW…SGFV, VVIC…LLSM, and VYII…PRLM.

Belongs to the complex I subunit 4 family.

The protein resides in the cellular thylakoid membrane. It catalyses the reaction a plastoquinone + NADH + (n+1) H(+)(in) = a plastoquinol + NAD(+) + n H(+)(out). The enzyme catalyses a plastoquinone + NADPH + (n+1) H(+)(in) = a plastoquinol + NADP(+) + n H(+)(out). Its function is as follows. NDH-1 shuttles electrons from NAD(P)H, via FMN and iron-sulfur (Fe-S) centers, to quinones in the respiratory chain. The immediate electron acceptor for the enzyme in this species is believed to be plastoquinone. Couples the redox reaction to proton translocation (for every two electrons transferred, four hydrogen ions are translocated across the cytoplasmic membrane), and thus conserves the redox energy in a proton gradient. This is NAD(P)H-quinone oxidoreductase chain 4 from Synechococcus sp. (strain CC9902).